Here is a 154-residue protein sequence, read N- to C-terminus: 17.6 kDa class I heat shock protein (154 aa).

Residues 40-154 form the sHSP domain; it reads ETSAFANTRI…PDVKSIEISG (115 aa).

Belongs to the small heat shock protein (HSP20) family. As to quaternary structure, forms oligomeric structures.

It is found in the cytoplasm. The chain is 17.6 kDa class I heat shock protein from Solanum peruvianum (Peruvian tomato).